The primary structure comprises 259 residues: 5'-nucleotidase SurE (259 aa).

Asp15, Asp16, Ser46, and Asn102 together coordinate a divalent metal cation.

It belongs to the SurE nucleotidase family. The cofactor is a divalent metal cation.

It localises to the cytoplasm. The enzyme catalyses a ribonucleoside 5'-phosphate + H2O = a ribonucleoside + phosphate. Functionally, nucleotidase that shows phosphatase activity on nucleoside 5'-monophosphates. The protein is 5'-nucleotidase SurE of Chlorobium luteolum (strain DSM 273 / BCRC 81028 / 2530) (Pelodictyon luteolum).